The chain runs to 39 residues: Protein YkiC (39 aa).

The helical transmembrane segment at leucine 13–alanine 35 threads the bilayer.

The protein resides in the cell inner membrane. The polypeptide is Protein YkiC (Escherichia coli (strain K12)).